The primary structure comprises 1210 residues: V-type proton ATPase 116 kDa subunit a 4 (1210 aa).

The Cytoplasmic segment spans residues 1-715 (MSSFSNVGFV…YTIITFPFLF (715 aa)). Over residues 259-271 (SSKISFTSSSPSP) the composition is skewed to low complexity. A disordered region spans residues 259 to 292 (SSKISFTSSSPSPQRNPKNEAQKNSSSKREETSM). Over residues 275-291 (PKNEAQKNSSSKREETS) the composition is skewed to basic and acidic residues. Residues 339-405 (FVKQMRRCEE…EREFLDLNNN (67 aa)) are a coiled coil. Residues 716-736 (AVMFGDAAHGAILLLAALFFI) traverse the membrane as a helical segment. The Extracellular segment spans residues 737 to 760 (RNERKIESKKIRDEIFNTFYGGRY). A helical transmembrane segment spans residues 761–781 (IMMLMGIFSIYTGFLYNDAFA). Topologically, residues 782 to 855 (KSFNVFGSGW…SFLNSMKMKA (74 aa)) are cytoplasmic. The chain crosses the membrane as a helical span at residues 856 to 876 (SVIIGITQMTFGVFLSVLNHI). Over 877 to 892 (HFKSYIDIISNFIPQV) the chain is Extracellular. A helical transmembrane segment spans residues 893–913 (IFLSCIFIYLCIQIIVKWIFF). Residues 914–976 (SVNAENVFGF…WYPNQRLVET (63 aa)) are Cytoplasmic-facing. A helical membrane pass occupies residues 977–997 (ILISISLACIPIMLFGKPLWV). Residues 998 to 1127 (RFVTSKRHKL…NETIAMCLKP (130 aa)) are Extracellular-facing. N1010, N1019, and N1118 each carry an N-linked (GlcNAc...) asparagine glycan. The chain crosses the membrane as a helical span at residues 1128 to 1148 (VVACVAFFIFASLSLSILIMM). Residues 1149–1210 (EGLSAFLHAL…DISSGQHLHI (62 aa)) lie on the Cytoplasmic side of the membrane.

It belongs to the V-ATPase 116 kDa subunit family. V-ATPase is a heteromultimeric enzyme made up of two complexes: the ATP-hydrolytic V1 complex and the proton translocation V0 complex. The V1 complex consists of three catalytic AB heterodimers that form a heterohexamer, three peripheral stalks each consisting of EG heterodimers, one central rotor including subunits D and F, and the regulatory subunits C and H. The proton translocation complex V0 consists of the proton transport subunit a, a ring of proteolipid subunits c9c'', rotary subunit d, subunits e and f, and the accessory subunits vah-19/Ac45 and vah-20/PRR. Expressed in uterus.

It is found in the membrane. Subunit of the V0 complex of vacuolar(H+)-ATPase (V-ATPase), a multisubunit enzyme composed of a peripheral complex (V1) that hydrolyzes ATP and a membrane integral complex (V0) that translocates protons. V-ATPase is responsible for acidifying and maintaining the pH of intracellular compartments and in some cell types, is targeted to the plasma membrane, where it is responsible for acidifying the extracellular environment. This chain is V-type proton ATPase 116 kDa subunit a 4, found in Caenorhabditis elegans.